The sequence spans 383 residues: Glutaminyl-peptide cyclotransferase-like protein (383 aa).

Positions 1–25 are disordered; the sequence is MPSGGRGRPRLQVGERSLLERPSPP. A helical transmembrane segment spans residues 35–57; sequence LLPQLLLALTVASVFYTIWRIWH. Cys168 and Cys192 are joined by a disulfide. Asp187 lines the Zn(2+) pocket. Glu226 (proton acceptor) is an active-site residue. Glu227 serves as a coordination point for Zn(2+). Asp270 serves as the catalytic Proton acceptor. His352 contributes to the Zn(2+) binding site.

Belongs to the glutaminyl-peptide cyclotransferase family.

The protein localises to the golgi apparatus membrane. The catalysed reaction is N-terminal L-glutaminyl-[peptide] = N-terminal 5-oxo-L-prolyl-[peptide] + NH4(+). Functionally, responsible for the biosynthesis of pyroglutamyl peptides. This chain is Glutaminyl-peptide cyclotransferase-like protein (QPCTL), found in Bos taurus (Bovine).